The chain runs to 406 residues: Vacuole membrane protein 1 (406 aa).

Basic and acidic residues predominate over residues 1 to 20 (MAENGKNCDQRRIAMSKDQH). The disordered stretch occupies residues 1–37 (MAENGKNCDQRRIAMSKDQHNGSLTDPSSVHEKKRRD). An N-acetylalanine modification is found at A2. At 2–77 (AENGKNCDQR…WTSKLWHRQS (76 aa)) the chain is on the cytoplasmic side. The helical transmembrane segment at 78 to 98 (IVVSFLLLLAALVATYYVEGA) threads the bilayer. Residues 99–109 (HQQYVQRIEKQ) are Extracellular-facing. The chain crosses the membrane as a helical span at residues 110 to 130 (FLLYAYWIGLGILSSVGLGTG). The Cytoplasmic segment spans residues 131 to 250 (LHTFLLYLGP…ASRAKLAVQK (120 aa)). The interval 173 to 316 (GAEGAISLWS…FVIVTFSKHI (144 aa)) is VTT domain. A helical transmembrane segment spans residues 251–271 (LVQKVGFFGILACASIPNPLF). The Extracellular segment spans residues 272–273 (DL). Residues 274-294 (AGITCGHFLVPFWTFFGATLI) traverse the membrane as a helical segment. Residues 295–305 (GKAIIKMHIQK) are Cytoplasmic-facing. A helical transmembrane segment spans residues 306 to 326 (IFVIVTFSKHIVEQMVTFIGA). Over 327-363 (VPGIGPSLQKPFQEYLEAQRQKLHHRSEAGTPQGENW) the chain is Extracellular. The chain crosses the membrane as a helical span at residues 364-384 (LSWMFEKLVVAMVCYFVLSII). The Cytoplasmic segment spans residues 385–406 (NSMAQNYAKRIQQRLNSEEKTK).

It belongs to the VMP1 family. As to quaternary structure, interacts with BECN1. Interacts with TJP1. Interacts with TP53INP2. Interacts with TMEM41B. Interacts with ATP2A2, PLN and SLN; competes with PLN and SLN to prevent them from forming an inhibitory complex with ATP2A2. Interacts with ATG2A.

It is found in the endoplasmic reticulum-Golgi intermediate compartment membrane. It localises to the cell membrane. The protein localises to the vacuole membrane. Its subcellular location is the endoplasmic reticulum membrane. It catalyses the reaction a 1,2-diacyl-sn-glycero-3-phospho-L-serine(in) = a 1,2-diacyl-sn-glycero-3-phospho-L-serine(out). The enzyme catalyses cholesterol(in) = cholesterol(out). The catalysed reaction is a 1,2-diacyl-sn-glycero-3-phosphocholine(in) = a 1,2-diacyl-sn-glycero-3-phosphocholine(out). It carries out the reaction a 1,2-diacyl-sn-glycero-3-phosphoethanolamine(in) = a 1,2-diacyl-sn-glycero-3-phosphoethanolamine(out). In terms of biological role, phospholipid scramblase involved in lipid homeostasis and membrane dynamics processes. Has phospholipid scramblase activity toward cholesterol and phosphatidylserine, as well as phosphatidylethanolamine and phosphatidylcholine. Required for autophagosome formation: participates in early stages of autophagosome biogenesis at the endoplasmic reticulum (ER) membrane by reequilibrating the leaflets of the ER as lipids are extracted by ATG2 (ATG2A or ATG2B) to mediate autophagosome assembly. Regulates ATP2A2 activity to control ER-isolation membrane contacts for autophagosome formation. In addition to autophagy, involved in other processes in which phospholipid scramblase activity is required. Modulates ER contacts with lipid droplets, mitochondria and endosomes. Plays an essential role in formation of cell junctions. Upon stress such as bacterial and viral infection, promotes formation of cytoplasmic vacuoles followed by cell death. Involved in the cytoplasmic vacuolization of acinar cells during the early stage of acute pancreatitis. This Mus musculus (Mouse) protein is Vacuole membrane protein 1.